Reading from the N-terminus, the 140-residue chain is Transmembrane protein 107 (140 aa).

Transmembrane regions (helical) follow at residues 7-27 and 53-73; these read LVPS…TLFW and LVAA…GFLS. N-linked (GlcNAc...) asparagine glycosylation is present at asparagine 79. The next 2 membrane-spanning stretches (helical) occupy residues 83-103 and 113-133; these read SLIS…FIFE and IFVF…VTVF.

Part of the tectonic-like complex (also named B9 complex). Interacts with TMEM237, TMEM231, MKS1 and TMEM216.

It localises to the membrane. The protein localises to the cell projection. Its subcellular location is the cilium. Its function is as follows. Plays a role in cilia formation and embryonic patterning. Requires for normal Sonic hedgehog (Shh) signaling in the neural tube and acts in combination with GLI2 and GLI3 to pattern ventral and intermediate neuronal cell types. During ciliogenesis regulates the ciliary transition zone localization of some MKS complex proteins. In Homo sapiens (Human), this protein is Transmembrane protein 107.